The primary structure comprises 383 residues: G-protein coupled receptor E1 (383 aa).

9 consecutive transmembrane segments (helical) span residues 13 to 35, 78 to 98, 109 to 129, 160 to 180, 190 to 210, 242 to 262, 279 to 299, 323 to 343, and 351 to 371; these read SSLA…TTIA, LYLL…IIVI, MLLL…PFWM, VFCI…AVTA, IVTC…EFFF, VIML…YVII, LIFV…IVLL, LITK…YAFV, and LYHF…PFLS. The cysteines at positions 145 and 222 are disulfide-linked.

The protein belongs to the G-protein coupled receptor 1 family.

It localises to the host membrane. In Equine herpesvirus 2 (strain 86/87) (EHV-2), this protein is G-protein coupled receptor E1 (E1).